Consider the following 368-residue polypeptide: Aminomethyltransferase (368 aa).

It belongs to the GcvT family. The glycine cleavage system is composed of four proteins: P, T, L and H.

It carries out the reaction N(6)-[(R)-S(8)-aminomethyldihydrolipoyl]-L-lysyl-[protein] + (6S)-5,6,7,8-tetrahydrofolate = N(6)-[(R)-dihydrolipoyl]-L-lysyl-[protein] + (6R)-5,10-methylene-5,6,7,8-tetrahydrofolate + NH4(+). In terms of biological role, the glycine cleavage system catalyzes the degradation of glycine. This chain is Aminomethyltransferase, found in Xylella fastidiosa (strain M23).